Here is a 2027-residue protein sequence, read N- to C-terminus: Citron Rho-interacting kinase (2027 aa).

An N-acetylmethionine modification is found at Met-1. In terms of domain architecture, Protein kinase spans 97 to 360 (FEVRSLVGCG…FEGLCCHPFF (264 aa)). ATP is bound by residues 103–111 (VGCGHFAEV) and Lys-126. The active-site Proton acceptor is Asp-221. Residues 361–431 (SKIDWNNIRN…SKALGILGRS (71 aa)) enclose the AGC-kinase C-terminal domain. Residues Ser-433, Ser-440, Ser-480, and Ser-582 each carry the phosphoserine modification. A coiled-coil region spans residues 453 to 1297 (IKSKELQDSQ…SAREEAAHRK (845 aa)). Positions 1091-1302 (LAVKEHKAEI…AAHRKATDHP (212 aa)) are interaction with Rho/Rac. Tyr-1196 carries the phosphotyrosine modification. Basic and acidic residues predominate over residues 1290–1303 (REEAAHRKATDHPH). Disordered stretches follow at residues 1290-1310 (REEA…PATA) and 1322-1351 (SPEH…EFSR). Over residues 1327–1337 (PSAMSLLAPPS) the composition is skewed to low complexity. Positions 1339–1351 (RRKESSTPEEFSR) are enriched in basic and acidic residues. The segment at 1362-1411 (PHRFNVGLNMRATKCAVCLDTVHFGRQASKCLECQVMCHPKCSTCLPATC) adopts a Phorbol-ester/DAG-type zinc-finger fold. A PH domain is found at 1443–1563 (SLHLEGWMKV…WVTALESVVA (121 aa)). The CNH domain occupies 1591 to 1881 (RLDMNCTLPF…RYLGPAISSG (291 aa)). An N6-acetyllysine modification is found at Lys-1721. Residues 1905–2012 (ESGTEHHRGP…RGRLPAGAVR (108 aa)) form a disordered region. Ser-1940 is modified (phosphoserine). The span at 1948–2003 (SHPREPSTPHRYREGRTELRRDKSPGRPLEREKSPGRMLSTRRERSPGRLFEDSSR) shows a compositional bias: basic and acidic residues. Positions 1953-1958 (PSTPHR) match the SH3-binding motif. The residue at position 1993 (Ser-1993) is a Phosphoserine. Thr-2013 carries the phosphothreonine modification.

It belongs to the protein kinase superfamily. AGC Ser/Thr protein kinase family. As to quaternary structure, directly interacts with KIF14 depending on the activation state (stronger interaction with the kinase-dead form). Homodimer. Interacts with TTC3.

The protein resides in the cytoplasm. It carries out the reaction L-seryl-[protein] + ATP = O-phospho-L-seryl-[protein] + ADP + H(+). The catalysed reaction is L-threonyl-[protein] + ATP = O-phospho-L-threonyl-[protein] + ADP + H(+). Plays a role in cytokinesis. Required for KIF14 localization to the central spindle and midbody. Putative RHO/RAC effector that binds to the GTP-bound forms of RHO and RAC1. It probably binds p21 with a tighter specificity in vivo. Displays serine/threonine protein kinase activity. Plays an important role in the regulation of cytokinesis and the development of the central nervous system. Phosphorylates MYL9/MLC2. The polypeptide is Citron Rho-interacting kinase (CIT) (Homo sapiens (Human)).